Consider the following 196-residue polypeptide: MEEKNKKGKIIIISGPSGVGKKTIIDQVINNVDLNLTYSISMTTRLPREHEKNGVDYFFVSEEEFNSAIEKGELLEWAEFANNKYGTPIKNLYKLIGENKNVILEIEVQGATKVKDILNREDYISIFLIPPSIRELKRRLKIRDTETKEKIKQRIKRAKVELKLQNEYDFIILNDDAKNAADKLRHILYEKVLEKK.

In terms of domain architecture, Guanylate kinase-like spans 8-189 (GKIIIISGPS…AADKLRHILY (182 aa)). 15–22 (GPSGVGKK) contacts ATP.

The protein belongs to the guanylate kinase family.

Its subcellular location is the cytoplasm. The enzyme catalyses GMP + ATP = GDP + ADP. Essential for recycling GMP and indirectly, cGMP. This Malacoplasma penetrans (strain HF-2) (Mycoplasma penetrans) protein is Guanylate kinase.